The primary structure comprises 343 residues: N-acetyl-gamma-glutamyl-phosphate reductase (343 aa).

The active site involves C149.

The protein belongs to the NAGSA dehydrogenase family. Type 1 subfamily.

The protein localises to the cytoplasm. It carries out the reaction N-acetyl-L-glutamate 5-semialdehyde + phosphate + NADP(+) = N-acetyl-L-glutamyl 5-phosphate + NADPH + H(+). The protein operates within amino-acid biosynthesis; L-arginine biosynthesis; N(2)-acetyl-L-ornithine from L-glutamate: step 3/4. Functionally, catalyzes the NADPH-dependent reduction of N-acetyl-5-glutamyl phosphate to yield N-acetyl-L-glutamate 5-semialdehyde. This Exiguobacterium sibiricum (strain DSM 17290 / CCUG 55495 / CIP 109462 / JCM 13490 / 255-15) protein is N-acetyl-gamma-glutamyl-phosphate reductase.